Here is a 421-residue protein sequence, read N- to C-terminus: NADH-quinone oxidoreductase subunit F (421 aa).

A disordered region spans residues 1–25; that stretch reads MLKEEDKIFTNLHGQQSHDLKSSKK. Over residues 16–25 the composition is skewed to basic and acidic residues; that stretch reads QSHDLKSSKK. An NAD(+)-binding site is contributed by 54-63; sequence GRGGAGFSTG. Residue 166-213 participates in FMN binding; it reads GAGAYICGEETALLESLEGKKGMPRLKPPFPAGFGLYGCPTTINNVES. 4 residues coordinate [4Fe-4S] cluster: C344, C347, C350, and C390.

This sequence belongs to the complex I 51 kDa subunit family. It depends on FMN as a cofactor. [4Fe-4S] cluster is required as a cofactor.

The enzyme catalyses a quinone + NADH + 5 H(+)(in) = a quinol + NAD(+) + 4 H(+)(out). NDH-1 shuttles electrons from NADH, via FMN and iron-sulfur (Fe-S) centers, to quinones in the respiratory chain. Couples the redox reaction to proton translocation (for every two electrons transferred, four hydrogen ions are translocated across the cytoplasmic membrane), and thus conserves the redox energy in a proton gradient. The protein is NADH-quinone oxidoreductase subunit F (nuoF) of Rickettsia massiliae (strain Mtu5).